Consider the following 434-residue polypeptide: Trigger factor (434 aa).

The PPIase FKBP-type domain maps to 163–248 (GDRVTIDFEG…LTKIEAQHLP (86 aa)).

Belongs to the FKBP-type PPIase family. Tig subfamily.

The protein localises to the cytoplasm. The enzyme catalyses [protein]-peptidylproline (omega=180) = [protein]-peptidylproline (omega=0). Involved in protein export. Acts as a chaperone by maintaining the newly synthesized protein in an open conformation. Functions as a peptidyl-prolyl cis-trans isomerase. This Methylibium petroleiphilum (strain ATCC BAA-1232 / LMG 22953 / PM1) protein is Trigger factor.